Here is a 275-residue protein sequence, read N- to C-terminus: Acetyl-coenzyme A carboxylase carboxyl transferase subunit beta (275 aa).

The CoA carboxyltransferase N-terminal domain occupies 18–275 (KDNAGPAVPS…IHRLGGEMHA (258 aa)). The segment at 23–47 (PAVPSNTHSSKSNGNPVSEMKENKR) is disordered. A compositionally biased stretch (polar residues) spans 26–38 (PSNTHSSKSNGNP).

This sequence belongs to the AccD/PCCB family. In terms of assembly, acetyl-CoA carboxylase is a heterohexamer composed of biotin carboxyl carrier protein (AccB), biotin carboxylase (AccC) and two subunits each of ACCase subunit alpha (AccA) and ACCase subunit beta (AccD).

It is found in the cytoplasm. It catalyses the reaction N(6)-carboxybiotinyl-L-lysyl-[protein] + acetyl-CoA = N(6)-biotinyl-L-lysyl-[protein] + malonyl-CoA. The protein operates within lipid metabolism; malonyl-CoA biosynthesis; malonyl-CoA from acetyl-CoA: step 1/1. Component of the acetyl coenzyme A carboxylase (ACC) complex. Biotin carboxylase (BC) catalyzes the carboxylation of biotin on its carrier protein (BCCP) and then the CO(2) group is transferred by the transcarboxylase to acetyl-CoA to form malonyl-CoA. This chain is Acetyl-coenzyme A carboxylase carboxyl transferase subunit beta, found in Alkaliphilus oremlandii (strain OhILAs) (Clostridium oremlandii (strain OhILAs)).